Consider the following 160-residue polypeptide: Prostaglandin E synthase 3 (160 aa).

One can recognise a CS domain in the interval M1 to T90. K33 carries the post-translational modification N6-acetyllysine. K35 is covalently cross-linked (Glycyl lysine isopeptide (Lys-Gly) (interchain with G-Cter in SUMO2)). Position 44 is a phosphoserine (S44). A Glycyl lysine isopeptide (Lys-Gly) (interchain with G-Cter in SUMO2) cross-link involves residue K65. A phosphoserine mark is found at S85, S100, S113, and S118. The tract at residues S118–E160 is disordered. Basic and acidic residues predominate over residues R122–G132. Residues D133–D153 are compositionally biased toward acidic residues. A phosphoserine mark is found at S148 and S151. The PXLE motif motif lies at P157 to E160.

This sequence belongs to the p23/wos2 family. In terms of assembly, probably forms a complex composed of chaperones HSP90 and HSP70, co-chaperones STIP1/HOP, CDC37, PPP5C, PTGES3/p23, TSC1 and client protein TSC2. Binds to the progesterone receptor. Interacts with TERT; the interaction, together with HSP90AA1, is required for correct assembly and stabilization of the telomerase holoenzyme complex. Interacts (via PXLE motif) with EGLN1/PHD2, recruiting EGLN1/PHD2 to the HSP90 pathway to facilitate HIF alpha proteins hydroxylation. Interacts with HSP90AA1, FLCN, FNIP1 and FNIP2. In terms of processing, proteolytically cleaved by caspase-7 (CASP7) in response to apoptosis, leading to its inactivation. Expressed in testis, kidney, bladder and ovary.

The protein resides in the cytoplasm. The catalysed reaction is prostaglandin H2 = prostaglandin E2. The protein operates within lipid metabolism; prostaglandin biosynthesis. Cytosolic prostaglandin synthase that catalyzes the oxidoreduction of prostaglandin endoperoxide H2 (PGH2) to prostaglandin E2 (PGE2). Molecular chaperone that localizes to genomic response elements in a hormone-dependent manner and disrupts receptor-mediated transcriptional activation, by promoting disassembly of transcriptional regulatory complexes. Facilitates HIF alpha proteins hydroxylation via interaction with EGLN1/PHD2, leading to recruit EGLN1/PHD2 to the HSP90 pathway. The sequence is that of Prostaglandin E synthase 3 (Ptges3) from Mus musculus (Mouse).